We begin with the raw amino-acid sequence, 1364 residues long: Outer kinetochore KNL1 complex subunit spc7 (1364 aa).

A compositionally biased stretch (polar residues) spans 1 to 15; the sequence is MPTSPRRNSIATTDN. 3 disordered regions span residues 1–36, 124–190, and 202–223; these read MPTSPRRNSIATTDNVIGRNKSRKRPHSLGGPGALQ, YPKD…DIAS, and EALNAGHPPPSLYPENDDLSIQ. The segment covering 124 to 136 has biased composition (basic and acidic residues); that stretch reads YPKDHQSDSEKST. The segment covering 157–169 has biased composition (polar residues); it reads GPTTTSFSRNETQ. A compositionally biased stretch (low complexity) spans 170–181; it reads SSPHSHSASIIS. Positions 254–257 match the MELT; degenerate motif; it reads MDLT. The residue at position 257 (Thr-257) is a Phosphothreonine; by mph1. Residues 289–334 are disordered; sequence ASHDPSNQTQLSSPNKSSSPTSIEISDFSKNNENHDQSENKEEEED. Low complexity predominate over residues 300-310; that stretch reads SSPNKSSSPTS. The span at 318–328 shows a compositional bias: basic and acidic residues; it reads KNNENHDQSEN. The MELT; degenerate signature appears at 450 to 453; the sequence is MDLT. Position 453 is a phosphothreonine; by mph1 (Thr-453). A disordered region spans residues 456–503; sequence ISSTNAPTHLNEDDLNQFTSNISSSSKPRKDNNKTANSSKPIPDSEDF. Positions 471 to 481 are enriched in polar residues; that stretch reads NQFTSNISSSS. The MELT; degenerate signature appears at 504–507; that stretch reads MDIT. Position 507 is a phosphothreonine; by mph1 (Thr-507). Disordered regions lie at residues 564-643 and 697-837; these read LPSA…SSFD and GATP…GVSN. The span at 566–585 shows a compositional bias: basic and acidic residues; sequence SADKENAEREEIPSYSDKSE. Over residues 586–617 the composition is skewed to polar residues; the sequence is NFNTTSFTNHERSPNGNNNLKFSKDPNSSSPS. The span at 719–730 shows a compositional bias: basic and acidic residues; that stretch reads EVSRQPTDDKGE. Polar residues predominate over residues 747–773; the sequence is LTIQQTNEIKHVPTNTTSSVKLPQQPS. The segment covering 791 to 802 has biased composition (basic and acidic residues); the sequence is SLERLESQEPNR. The span at 808–820 shows a compositional bias: polar residues; the sequence is VGSSNAGNTTSVG. Positions 1075–1155 form a coiled coil; the sequence is LAQAQEKLEK…EEQLLNLKNE (81 aa). A Nuclear localization signal motif is present at residues 1091 to 1105; it reads RRRRLLSEKEERRKE.

Component of the KNL1/SPC105 complex composed of at least spc7 and sos7. Part of the outer kinetochore KMN network that includes the KNL1, MIS12 and NDC80 complexes. Interacts (via C-terminus) with sos7 (via C-terminus); the interaction is direct. Interacts (when phosphorylated on MELT motifs) with bub1 and bub3; to recruit the BUB1-BUB3 complex to the kinetochore. In terms of processing, phosphorylation of threonine residues in the MELT motifs by mph1/mps1 leads to recruitment of bub1 and bub3 to the kinetochore, and is required to maintain spindle assembly checkpoint signaling.

It localises to the nucleus. The protein localises to the chromosome. Its subcellular location is the centromere. The protein resides in the kinetochore. Functionally, acts as a component of the outer kinetochore KNL1 complex that serves as a docking point for spindle assembly checkpoint components and mediates microtubule-kinetochore interactions. Kinetochores, consisting of a centromere-associated inner segment and a microtubule-contacting outer segment, play a crucial role in chromosome segregation by mediating the physical connection between centromeric DNA and spindle microtubules. The outer kinetochore is made up of the ten-subunit KMN network, comprising the MIS12, NDC80 and KNL1 complexes, and auxiliary microtubule-associated components; together they connect the outer kinetochore with the inner kinetochore, bind microtubules, and mediate interactions with mitotic checkpoint proteins that delay anaphase until chromosomes are bioriented on the spindle. Recruits the BUB1-BUB3 complex to kinetochores when phosphorylated by mph1/mps1, to support spindle assembly checkpoint signaling. Functions both in mitotic and in meiotic chromosome segregation. This Schizosaccharomyces pombe (strain 972 / ATCC 24843) (Fission yeast) protein is Outer kinetochore KNL1 complex subunit spc7.